The primary structure comprises 287 residues: Probable endonuclease LCL3 (287 aa).

Residues 1–40 (MPWPFGPSGSSEAPPPQKPRDDKVEGREPAKSWNSLLPKP) form a disordered region. The span at 18–30 (KPRDDKVEGREPA) shows a compositional bias: basic and acidic residues. Residues 50-67 (WAPVFLTAVGSLAAFMFY) traverse the membrane as a helical segment. The 159-residue stretch at 88–246 (RSLLGRVTSV…KAKKLGLWSI (159 aa)) folds into the TNase-like domain. Arg137 is a catalytic residue. A Ca(2+)-binding site is contributed by Asp142. Catalysis depends on residues Glu145 and Arg185. Residues 254–272 (PRDFKNRTQGNEKSERDVE) are compositionally biased toward basic and acidic residues. Residues 254–278 (PRDFKNRTQGNEKSERDVEGSTVQK) form a disordered region.

The protein belongs to the LCL3 family.

The protein localises to the mitochondrion. It is found in the membrane. The protein is Probable endonuclease LCL3 (LCL3) of Verticillium alfalfae (strain VaMs.102 / ATCC MYA-4576 / FGSC 10136) (Verticillium wilt of alfalfa).